Here is a 457-residue protein sequence, read N- to C-terminus: ADP-dependent glucose/glucosamine kinase (457 aa).

In terms of domain architecture, ADPK spans 5–457 (TNWESLYEKA…SAFVSEFSLH (453 aa)). D-glucose is bound by residues aspartate 37, glutamate 91, 115-116 (GQ), and histidine 179. Glutamate 269 contacts Mg(2+). ADP is bound at residue asparagine 295. Glutamate 298 is a binding site for Mg(2+). ADP contacts are provided by residues 345 to 346 (HT), valine 432, and glycine 442. D-glucose is bound at residue aspartate 443. Aspartate 443 lines the Mg(2+) pocket. Aspartate 443 functions as the Proton acceptor in the catalytic mechanism.

Belongs to the ADP-dependent glucokinase family. The cofactor is Mg(2+).

It is found in the cytoplasm. The catalysed reaction is D-glucose + ADP = D-glucose 6-phosphate + AMP + H(+). The enzyme catalyses D-glucosamine + ADP = D-glucosamine 6-phosphate + AMP + H(+). It functions in the pathway carbohydrate degradation; glycolysis. With respect to regulation, inhibited by 8-bromoadenosine phosphate (8-Br-AMP). Its function is as follows. Catalyzes the ADP-dependent phosphorylation of D-glucose to D-glucose 6-phosphate and glucosamine to glucosamine 6-phosphate. The chain is ADP-dependent glucose/glucosamine kinase from Pyrococcus horikoshii (strain ATCC 700860 / DSM 12428 / JCM 9974 / NBRC 100139 / OT-3).